A 558-amino-acid polypeptide reads, in one-letter code: UvrABC system protein C (558 aa).

A GIY-YIG domain is found at 12–92 (LLPGVYIFYG…IFNHKPKYNV (81 aa)). Residues 200–235 (SETLDLIEEKMKKHAKMMDFENAAKYRDLLVKFENV) enclose the UVR domain.

It belongs to the UvrC family. As to quaternary structure, interacts with UvrB in an incision complex.

The protein resides in the cytoplasm. The UvrABC repair system catalyzes the recognition and processing of DNA lesions. UvrC both incises the 5' and 3' sides of the lesion. The N-terminal half is responsible for the 3' incision and the C-terminal half is responsible for the 5' incision. This Pseudothermotoga lettingae (strain ATCC BAA-301 / DSM 14385 / NBRC 107922 / TMO) (Thermotoga lettingae) protein is UvrABC system protein C.